We begin with the raw amino-acid sequence, 432 residues long: Ribulose bisphosphate carboxylase-like protein 2 (432 aa).

Lys-198, Asp-200, and Glu-201 together coordinate Mg(2+). The residue at position 198 (Lys-198) is an N6-carboxylysine.

Belongs to the RuBisCO large chain family. Type IV subfamily. As to quaternary structure, homodimer. Mg(2+) is required as a cofactor.

May be involved in sulfur metabolism and oxidative stress response. Does not show RuBisCO activity. This Rhodopseudomonas palustris (strain ATCC BAA-98 / CGA009) protein is Ribulose bisphosphate carboxylase-like protein 2 (rlp2).